A 483-amino-acid chain; its full sequence is Probable L-xylulose kinase (483 aa).

Belongs to the FGGY kinase family. As to quaternary structure, homodimer.

It catalyses the reaction L-xylulose + ATP = L-xylulose 5-phosphate + ADP + H(+). The protein is Probable L-xylulose kinase (lyx) of Pasteurella multocida (strain Pm70).